Consider the following 113-residue polypeptide: ATP-dependent Clp protease adapter protein ClpS (113 aa).

Over residues 1–11 the composition is skewed to basic and acidic residues; sequence MHRDLHMMSDR. The disordered stretch occupies residues 1 to 25; sequence MHRDLHMMSDRSEDDGDTSILTATK.

This sequence belongs to the ClpS family. As to quaternary structure, binds to the N-terminal domain of the chaperone ClpA.

Its function is as follows. Involved in the modulation of the specificity of the ClpAP-mediated ATP-dependent protein degradation. This chain is ATP-dependent Clp protease adapter protein ClpS, found in Roseobacter denitrificans (strain ATCC 33942 / OCh 114) (Erythrobacter sp. (strain OCh 114)).